A 136-amino-acid polypeptide reads, in one-letter code: Large ribosomal subunit protein bL21 (136 aa).

The tract at residues 107-136 is disordered; sequence RAAADRKTAPKRASAKAAADQTTAAQATAE. Residues 121–136 show a composition bias toward low complexity; sequence AKAAADQTTAAQATAE.

It belongs to the bacterial ribosomal protein bL21 family. As to quaternary structure, part of the 50S ribosomal subunit. Contacts protein L20.

This protein binds to 23S rRNA in the presence of protein L20. The polypeptide is Large ribosomal subunit protein bL21 (Acidothermus cellulolyticus (strain ATCC 43068 / DSM 8971 / 11B)).